Here is a 458-residue protein sequence, read N- to C-terminus: Cysteine--tRNA ligase (458 aa).

Zn(2+) is bound at residue cysteine 29. The short motif at 31–41 (MTVYDLCHLGH) is the 'HIGH' region element. Zn(2+) contacts are provided by cysteine 213, histidine 238, and glutamate 242. The 'KMSKS' region motif lies at 270–274 (KMSKS). ATP is bound at residue lysine 273.

This sequence belongs to the class-I aminoacyl-tRNA synthetase family. Monomer. Requires Zn(2+) as cofactor.

The protein resides in the cytoplasm. The enzyme catalyses tRNA(Cys) + L-cysteine + ATP = L-cysteinyl-tRNA(Cys) + AMP + diphosphate. The sequence is that of Cysteine--tRNA ligase from Acidovorax sp. (strain JS42).